The chain runs to 349 residues: uncharacterized protein (349 aa).

Over residues 116–135 (HFSQTNPKSTPEPPCTSSSG) the composition is skewed to polar residues. The disordered stretch occupies residues 116–148 (HFSQTNPKSTPEPPCTSSSGAGDCHENLPADGY).

This is an uncharacterized protein from Caenorhabditis elegans.